The sequence spans 448 residues: Ribulose bisphosphate carboxylase large chain (448 aa).

N6,N6,N6-trimethyllysine is present on K4. Residues N113 and T163 each coordinate substrate. Residue K165 is the Proton acceptor of the active site. K167 provides a ligand contact to substrate. K191, D193, and E194 together coordinate Mg(2+). K191 bears the N6-carboxylysine mark. Catalysis depends on H284, which acts as the Proton acceptor. Positions 285, 317, and 369 each coordinate substrate.

Belongs to the RuBisCO large chain family. Type I subfamily. In terms of assembly, heterohexadecamer of 8 large chains and 8 small chains; disulfide-linked. The disulfide link is formed within the large subunit homodimers. Mg(2+) is required as a cofactor. The disulfide bond which can form in the large chain dimeric partners within the hexadecamer appears to be associated with oxidative stress and protein turnover.

It is found in the plastid. The protein localises to the chloroplast. It carries out the reaction 2 (2R)-3-phosphoglycerate + 2 H(+) = D-ribulose 1,5-bisphosphate + CO2 + H2O. The enzyme catalyses D-ribulose 1,5-bisphosphate + O2 = 2-phosphoglycolate + (2R)-3-phosphoglycerate + 2 H(+). RuBisCO catalyzes two reactions: the carboxylation of D-ribulose 1,5-bisphosphate, the primary event in carbon dioxide fixation, as well as the oxidative fragmentation of the pentose substrate in the photorespiration process. Both reactions occur simultaneously and in competition at the same active site. The protein is Ribulose bisphosphate carboxylase large chain of Eucryphia lucida (Leatherwood).